The chain runs to 273 residues: Bifunctional protein FolD (273 aa).

NADP(+) contacts are provided by residues 152–154, Thr-179, and Ile-220; that span reads GRS.

The protein belongs to the tetrahydrofolate dehydrogenase/cyclohydrolase family. As to quaternary structure, homodimer.

The catalysed reaction is (6R)-5,10-methylene-5,6,7,8-tetrahydrofolate + NADP(+) = (6R)-5,10-methenyltetrahydrofolate + NADPH. The enzyme catalyses (6R)-5,10-methenyltetrahydrofolate + H2O = (6R)-10-formyltetrahydrofolate + H(+). The protein operates within one-carbon metabolism; tetrahydrofolate interconversion. Catalyzes the oxidation of 5,10-methylenetetrahydrofolate to 5,10-methenyltetrahydrofolate and then the hydrolysis of 5,10-methenyltetrahydrofolate to 10-formyltetrahydrofolate. In Petrotoga mobilis (strain DSM 10674 / SJ95), this protein is Bifunctional protein FolD.